The chain runs to 336 residues: Ribose-phosphate pyrophosphokinase 1 (336 aa).

Mg(2+) contacts are provided by D150, H152, D161, and D165. Positions 236–251 are binding of phosphoribosylpyrophosphate; that stretch reads GKVAVMVDDMIDTAGT.

Belongs to the ribose-phosphate pyrophosphokinase family.

The catalysed reaction is D-ribose 5-phosphate + ATP = 5-phospho-alpha-D-ribose 1-diphosphate + AMP + H(+). The chain is Ribose-phosphate pyrophosphokinase 1 (PRS1) from Spinacia oleracea (Spinach).